A 181-amino-acid polypeptide reads, in one-letter code: Neuroblastoma suppressor of tumorigenicity 1 (181 aa).

Residues 1–16 (MMLRVLVGAVLPAMLL) form the signal peptide. 5 disulfides stabilise this stretch: Cys35–Cys85, Cys49–Cys99, Cys59–Cys118, Cys63–Cys120, and Cys82–Cys123. The CTCK domain maps to 35–124 (CEAKNITQIV…ILHCSCQACG (90 aa)). The disordered stretch occupies residues 132 to 181 (LSVYVQGEDGPGSQPGTHPHPHPHPHPGGQTPEPEDPPGAPHTEEEGAED).

This sequence belongs to the DAN family. Homodimer. As to expression, most abundant in normal lung and meningioma.

Its subcellular location is the secreted. Its function is as follows. Possible candidate as a tumor suppressor gene of neuroblastoma. May play an important role in preventing cells from entering the final stage (G1/S) of the transformation process. This is Neuroblastoma suppressor of tumorigenicity 1 (NBL1) from Homo sapiens (Human).